We begin with the raw amino-acid sequence, 272 residues long: Shikimate dehydrogenase (NADP(+)) (272 aa).

Shikimate contacts are provided by residues 14 to 16 (SKS) and T61. The active-site Proton acceptor is the K65. E77 is a binding site for NADP(+). N86 and D102 together coordinate shikimate. NADP(+) contacts are provided by residues 126-130 (GAGGA), 149-154 (NRTVSR), and M213. Residue Y215 participates in shikimate binding. Residue G237 participates in NADP(+) binding.

It belongs to the shikimate dehydrogenase family. As to quaternary structure, homodimer.

The catalysed reaction is shikimate + NADP(+) = 3-dehydroshikimate + NADPH + H(+). It functions in the pathway metabolic intermediate biosynthesis; chorismate biosynthesis; chorismate from D-erythrose 4-phosphate and phosphoenolpyruvate: step 4/7. Its function is as follows. Involved in the biosynthesis of the chorismate, which leads to the biosynthesis of aromatic amino acids. Catalyzes the reversible NADPH linked reduction of 3-dehydroshikimate (DHSA) to yield shikimate (SA). This is Shikimate dehydrogenase (NADP(+)) from Shigella flexneri serotype 5b (strain 8401).